A 1185-amino-acid chain; its full sequence is 205 kDa microtubule-associated protein (1185 aa).

Positions glutamate 146–glutamine 159 are enriched in low complexity. The tract at residues glutamate 146–proline 196 is disordered. Over residues serine 179–proline 196 the composition is skewed to polar residues. A phosphoserine mark is found at serine 354 and serine 448. Tyrosine 450 bears the Phosphotyrosine mark. 3 positions are modified to phosphoserine: serine 709, serine 710, and serine 712. Threonine 721 carries the phosphothreonine modification. Serine 728 carries the post-translational modification Phosphoserine. Positions threonine 745 to threonine 977 are microtubule-binding. Residues serine 856–serine 866 are compositionally biased toward low complexity. Disordered regions lie at residues serine 856 to alanine 1035 and serine 1054 to alanine 1114. Composition is skewed to polar residues over residues leucine 867–serine 881 and threonine 908–alanine 936. At serine 874 the chain carries Phosphoserine. The span at alanine 940–alanine 952 shows a compositional bias: low complexity. Residues proline 989–valine 999 show a composition bias toward polar residues. Low complexity predominate over residues proline 1003–proline 1015. Composition is skewed to polar residues over residues asparagine 1016–asparagine 1026 and serine 1054–arginine 1066. Residues serine 1075 and serine 1086 each carry the phosphoserine modification. Polar residues predominate over residues leucine 1100–serine 1111. Serine 1121 carries the phosphoserine modification.

The protein localises to the cytoplasm. Its subcellular location is the cytoskeleton. The protein resides in the spindle. Its function is as follows. May play an important role in the regulation of microtubule assembly and interaction. This chain is 205 kDa microtubule-associated protein (Map205), found in Drosophila melanogaster (Fruit fly).